The sequence spans 5218 residues: HC-toxin synthetase (5218 aa).

The segment at 223-620 (SARAHEQDAN…VGRSDTQIKL (398 aa)) is adenylation 1. Positions 769-843 (MNDDSLLLTA…TAASCIKSAQ (75 aa)) constitute a Carrier 1 domain. Position 803 is an O-(pantetheine 4'-phosphoryl)serine (serine 803). The interval 858–1154 (IPVSPIQKLF…GWFTTISPVY (297 aa)) is condensation 1. An epimerization region spans residues 1338-1806 (EGVYPGSPMQ…LPIVSEHDTA (469 aa)). An adenylation 2 region spans residues 1828-2233 (SRKVVEHPQR…IGRKDTQVKM (406 aa)). The Carrier 2 domain maps to 2379–2453 (ETTDTVEDRL…DMAKLFSHGQ (75 aa)). An O-(pantetheine 4'-phosphoryl)serine modification is found at serine 2414. Residues 2531-2929 (EDVFPCTPMQ…MEQFGHNLQT (399 aa)) are condensation 2. The adenylation 3 stretch occupies residues 2979 to 3386 (LEETAQSQPA…GRKDGQIKLR (408 aa)). One can recognise a Carrier 3 domain in the interval 3532 to 3608 (QVLTTNESVL…DMAGQISFVQ (77 aa)). Serine 3569 carries the O-(pantetheine 4'-phosphoryl)serine modification. The tract at residues 3649–4102 (EDVYPCTPLQ…PALSEAHLAE (454 aa)) is condensation 3. The adenylation 4 stretch occupies residues 4134–4530 (RRAQQSPNSQ…NLYYVRRKDS (397 aa)). In terms of domain architecture, Carrier 4 spans 4666–4740 (THTQKLLRQL…AMSSLIDEHN (75 aa)). An O-(pantetheine 4'-phosphoryl)serine modification is found at serine 4701. Residues 4785–5101 (TLPCTEYQQM…SAIREFIPQA (317 aa)) form a condensation 4 region.

Belongs to the NRP synthetase family. Requires pantetheine 4'-phosphate as cofactor.

It participates in mycotoxin biosynthesis; HC-toxin biosynthesis. Its function is as follows. Non-ribosomal peptide synthetase, part of the diffuse TOX2 gene cluster that mediates the biosynthesis of the HC-toxin, cyclic tetrapeptide of structure cyclo(D-Pro-L-Ala-D-Ala-L-Aeo), where Aeo stands for 2-amino-9,10-epoxi-8-oxodecanoic acid. HC-toxin is a determinant of specificity and virulence in the interaction between the producing fungus and its host, maize. HTS1, contains four modules, one for each amino acid in HC-toxin, with the order of activation being most likely Pro, Ala, Ala, and Aeo. In addition, HTS1 has one epimerase domain between modules 1 and 2, which is responsible for epimerizing L-Pro to D-Pro. The absence of an epimerizing domain after module 3, for producing D-Ala, can be explained by the presence in the cluster of TOXG, an Ala racemase, which produces D-Ala for incorporation by HTS1 into HC-toxin. The chain is HC-toxin synthetase from Cochliobolus carbonum (Maize leaf spot fungus).